A 357-amino-acid polypeptide reads, in one-letter code: Membrane-bound lytic murein transglycosylase C (357 aa).

Residues 1 to 17 form the signal peptide; that stretch reads MKLKKFLVLLLIPFLYA. The N-palmitoyl cysteine moiety is linked to residue Cys-18. A lipid anchor (S-diacylglycerol cysteine) is attached at Cys-18.

Belongs to the transglycosylase Slt family.

The protein localises to the cell outer membrane. The catalysed reaction is Exolytic cleavage of the (1-&gt;4)-beta-glycosidic linkage between N-acetylmuramic acid (MurNAc) and N-acetylglucosamine (GlcNAc) residues in peptidoglycan, from either the reducing or the non-reducing ends of the peptidoglycan chains, with concomitant formation of a 1,6-anhydrobond in the MurNAc residue.. In terms of biological role, murein-degrading enzyme. May play a role in recycling of muropeptides during cell elongation and/or cell division. The protein is Membrane-bound lytic murein transglycosylase C of Mannheimia succiniciproducens (strain KCTC 0769BP / MBEL55E).